The chain runs to 626 residues: Probable potassium transport system protein Kup 3 (626 aa).

A run of 12 helical transmembrane segments spans residues Leu-10–Leu-30, Val-51–Val-71, Val-107–Ile-127, Pro-141–Phe-161, Phe-173–Val-193, Leu-216–Tyr-236, Trp-251–Leu-271, Leu-293–Phe-313, Ile-341–Phe-361, Tyr-371–Val-391, Ala-401–Val-421, and Ile-423–Thr-443.

The protein belongs to the HAK/KUP transporter (TC 2.A.72) family.

It is found in the cell inner membrane. It catalyses the reaction K(+)(in) + H(+)(in) = K(+)(out) + H(+)(out). Transport of potassium into the cell. Likely operates as a K(+):H(+) symporter. This Dechloromonas aromatica (strain RCB) protein is Probable potassium transport system protein Kup 3.